A 231-amino-acid polypeptide reads, in one-letter code: Response regulator Rre1 (231 aa).

One can recognise a Response regulatory domain in the interval 6 to 123; it reads SLLLVDDEPG…ELEAIVRNLL (118 aa). 4-aspartylphosphate is present on aspartate 56. Residues 163 to 228 form the HTH luxR-type domain; that stretch reads PSPIKLDFTP…ELVRFALQHG (66 aa). The segment at residues 187–206 is a DNA-binding region (H-T-H motif); sequence NKEIAAQLKTSVRNVEKYVS.

In terms of assembly, interacts with histidine kinase Hik2; may accept phosphate from Hik2.

Member of at least 2 two-component regulatory systems Hik2/Rre1 and Hik34/Rre1. Responds to hyperosmotic stress, regulates expression of at least 24 genes including dnaK2 and hspA with Hik34 and sigB (sll0306), sll0528, slr1119, slr0852 and ssr3188 with Hik2. Responds to salt stress, regulates expression of at least 24 genes including adhA, dnaK2 and hspA with Hik34. Binds the adhA promoter. Phosphorylated by Hik2 in vitro. Phosphorylated protein has 10-fold higher affinity for DNA than unphosphorylated protein. The sequence is that of Response regulator Rre1 from Synechocystis sp. (strain ATCC 27184 / PCC 6803 / Kazusa).